Here is a 384-residue protein sequence, read N- to C-terminus: Nodal homolog 2-B (384 aa).

The signal sequence occupies residues 1 to 18 (MASLGAILLFAIASLMHG). The propeptide occupies 19–283 (RPIHSDRKGA…RVADARRHRR (265 aa)). Residues Asn-71, Asn-173, and Asn-344 are each glycosylated (N-linked (GlcNAc...) asparagine). An intrachain disulfide couples Cys-306 to Cys-372.

This sequence belongs to the TGF-beta family. As to quaternary structure, homodimer; disulfide-linked. Forms heterodimers with the TGF-beta family member derriere. Interacts with tsku; enhances nodal2 activity.

It is found in the secreted. Its function is as follows. Cooperation and regulatory loops of multiple nodals are essential for mesendoderm patterning in early embryos. Essential for mesoderm formation and axial patterning during embryonic development. Activates the activin-like signaling pathway to induce dorsal and ventral mesoderm in animal cap ectoderm. In addition, also dorsalizes ventral marginal zone (VMZ) tissues during gastrulation. Induces muscle actin. Appears to act as both a short-range and long-range morphogen. The unprocessed protein inhibits bmp- and wnt-signaling. This chain is Nodal homolog 2-B (nodal2-b), found in Xenopus laevis (African clawed frog).